Consider the following 79-residue polypeptide: Small ribosomal subunit protein eS17 (79 aa).

It belongs to the eukaryotic ribosomal protein eS17 family.

The polypeptide is Small ribosomal subunit protein eS17 (Saccharolobus solfataricus (strain ATCC 35092 / DSM 1617 / JCM 11322 / P2) (Sulfolobus solfataricus)).